A 1529-amino-acid polypeptide reads, in one-letter code: DNA-directed RNA polymerase subunit beta' (1529 aa).

Zn(2+) is bound by residues cysteine 156, cysteine 158, cysteine 183, and cysteine 186. Positions 1328, 1330, and 1332 each coordinate Mg(2+).

This sequence belongs to the RNA polymerase beta' chain family. RpoC1 subfamily. In terms of assembly, in plastids the minimal PEP RNA polymerase catalytic core is composed of four subunits: alpha, beta, beta', and beta''. When a (nuclear-encoded) sigma factor is associated with the core the holoenzyme is formed, which can initiate transcription. It depends on Mg(2+) as a cofactor. Zn(2+) serves as cofactor.

Its subcellular location is the plastid. It is found in the chloroplast. The catalysed reaction is RNA(n) + a ribonucleoside 5'-triphosphate = RNA(n+1) + diphosphate. Functionally, DNA-dependent RNA polymerase catalyzes the transcription of DNA into RNA using the four ribonucleoside triphosphates as substrates. The polypeptide is DNA-directed RNA polymerase subunit beta' (Tetradesmus obliquus (Green alga)).